A 211-amino-acid polypeptide reads, in one-letter code: Phosphoserine phosphatase 1 (211 aa).

H9 serves as the catalytic Tele-phosphohistidine intermediate. H150 is an active-site residue.

This sequence belongs to the histidine phosphatase superfamily. Metal-independent phosphoserine phosphatase family. Homodimer. Can also form a heterodimer with PspB.

The enzyme catalyses O-phospho-L-serine + H2O = L-serine + phosphate. It carries out the reaction O-phospho-D-serine + H2O = D-serine + phosphate. The protein operates within amino-acid biosynthesis; L-serine biosynthesis; L-serine from 3-phospho-D-glycerate: step 3/3. With respect to regulation, activity is not inhibited by EDTA in vitro, nor enhanced by the addition of Mg(2+). Catalyzes the dephosphorylation of L-phosphoserine to serine and inorganic phosphate. Is poorly or not active toward D-phosphoserine, DL-phosphothreonine, 3-phosphoglycerate, para-nitrophenylphosphate, and fructose-6-phosphate. Does not display phosphoglycerate mutase activity. The polypeptide is Phosphoserine phosphatase 1 (pspA) (Hydrogenobacter thermophilus (strain DSM 6534 / IAM 12695 / TK-6)).